A 352-amino-acid polypeptide reads, in one-letter code: tRNA pseudouridine synthase D (352 aa).

Asp81 acts as the Nucleophile in catalysis. In terms of domain architecture, TRUD spans 157-303 (GVPNYFGTQR…MDHERRILRL (147 aa)).

It belongs to the pseudouridine synthase TruD family.

The catalysed reaction is uridine(13) in tRNA = pseudouridine(13) in tRNA. Functionally, responsible for synthesis of pseudouridine from uracil-13 in transfer RNAs. In Pseudomonas putida (strain ATCC 47054 / DSM 6125 / CFBP 8728 / NCIMB 11950 / KT2440), this protein is tRNA pseudouridine synthase D.